Reading from the N-terminus, the 141-residue chain is MEMFQGLLLWLLLNTGGAWASRGPLRPLCRPINATLAAENEACPVCITFTTTICAGYCPSMVRVLPAALPPVPQPVCTYHELRFASIRLPGCPPGVDPMVSFPVALSCRCGPCRLSNSDCGGPRAQPLACDRPPLPGLLFL.

An N-terminal signal peptide occupies residues 1–20 (MEMFQGLLLWLLLNTGGAWA). 6 cysteine pairs are disulfide-bonded: C29–C77, C43–C92, C46–C130, C54–C108, C58–C110, and C113–C120. N33 carries N-linked (GlcNAc...) asparagine glycosylation.

This sequence belongs to the glycoprotein hormones subunit beta family. Heterodimer of a common alpha chain and a unique beta chain which confers biological specificity to thyrotropin, lutropin, follitropin and gonadotropin.

The protein localises to the secreted. Promotes spermatogenesis and ovulation by stimulating the testes and ovaries to synthesize steroids. In Ailuropoda melanoleuca (Giant panda), this protein is Lutropin subunit beta (LHB).